A 729-amino-acid chain; its full sequence is Fatty acid oxidation complex subunit alpha (729 aa).

The enoyl-CoA hydratase/isomerase stretch occupies residues 1-189; sequence MLYQSETLQL…KIGLVDAVVD (189 aa). Residue Asp296 participates in substrate binding. The segment at 311–729 is 3-hydroxyacyl-CoA dehydrogenase; sequence AAPKLAAVLG…LLDVSTNQPA (419 aa). NAD(+)-binding positions include Met324, Asp343, 400–402, Lys407, and Ser429; that span reads VVE. The active-site For 3-hydroxyacyl-CoA dehydrogenase activity is His450. Asn453 contacts NAD(+). Substrate-binding residues include Asn500 and Tyr660.

The protein in the N-terminal section; belongs to the enoyl-CoA hydratase/isomerase family. It in the C-terminal section; belongs to the 3-hydroxyacyl-CoA dehydrogenase family. In terms of assembly, heterotetramer of two alpha chains (FadB) and two beta chains (FadA).

It carries out the reaction a (3S)-3-hydroxyacyl-CoA + NAD(+) = a 3-oxoacyl-CoA + NADH + H(+). The catalysed reaction is a (3S)-3-hydroxyacyl-CoA = a (2E)-enoyl-CoA + H2O. It catalyses the reaction a 4-saturated-(3S)-3-hydroxyacyl-CoA = a (3E)-enoyl-CoA + H2O. The enzyme catalyses (3S)-3-hydroxybutanoyl-CoA = (3R)-3-hydroxybutanoyl-CoA. It carries out the reaction a (3Z)-enoyl-CoA = a 4-saturated (2E)-enoyl-CoA. The catalysed reaction is a (3E)-enoyl-CoA = a 4-saturated (2E)-enoyl-CoA. It participates in lipid metabolism; fatty acid beta-oxidation. In terms of biological role, involved in the aerobic and anaerobic degradation of long-chain fatty acids via beta-oxidation cycle. Catalyzes the formation of 3-oxoacyl-CoA from enoyl-CoA via L-3-hydroxyacyl-CoA. It can also use D-3-hydroxyacyl-CoA and cis-3-enoyl-CoA as substrate. The sequence is that of Fatty acid oxidation complex subunit alpha from Yersinia pestis bv. Antiqua (strain Antiqua).